A 197-amino-acid polypeptide reads, in one-letter code: Probable GTP-binding protein EngB (197 aa).

The EngB-type G domain occupies 25 to 197 (SAPEIAFAGR…VRDEFFKFTR (173 aa)). Residues 33-40 (GRSNVGKS), 60-64 (GCTRQ), 79-82 (DLPG), 146-149 (TKID), and 177-179 (ISI) each bind GTP. Positions 40 and 62 each coordinate Mg(2+).

This sequence belongs to the TRAFAC class TrmE-Era-EngA-EngB-Septin-like GTPase superfamily. EngB GTPase family. The cofactor is Mg(2+).

Its function is as follows. Necessary for normal cell division and for the maintenance of normal septation. This is Probable GTP-binding protein EngB from Wolbachia pipientis subsp. Culex pipiens (strain wPip).